The chain runs to 89 residues: Co-chaperonin GroES (89 aa).

It belongs to the GroES chaperonin family. Heptamer of 7 subunits arranged in a ring. Interacts with the chaperonin GroEL.

Its subcellular location is the cytoplasm. Its function is as follows. Together with the chaperonin GroEL, plays an essential role in assisting protein folding. The GroEL-GroES system forms a nano-cage that allows encapsulation of the non-native substrate proteins and provides a physical environment optimized to promote and accelerate protein folding. GroES binds to the apical surface of the GroEL ring, thereby capping the opening of the GroEL channel. The chain is Co-chaperonin GroES from Pseudothermotoga lettingae (strain ATCC BAA-301 / DSM 14385 / NBRC 107922 / TMO) (Thermotoga lettingae).